We begin with the raw amino-acid sequence, 264 residues long: DNA repair protein RecO (264 aa).

This sequence belongs to the RecO family.

Involved in DNA repair and RecF pathway recombination. In Chlorobium luteolum (strain DSM 273 / BCRC 81028 / 2530) (Pelodictyon luteolum), this protein is DNA repair protein RecO.